The following is a 179-amino-acid chain: NAD(P)H-quinone oxidoreductase subunit I, chloroplastic (179 aa).

4Fe-4S ferredoxin-type domains follow at residues 55 to 84 and 95 to 124; these read GRIH…VDWR and LNYS…MTEE. [4Fe-4S] cluster contacts are provided by C64, C67, C70, C74, C104, C107, C110, and C114.

Belongs to the complex I 23 kDa subunit family. NDH is composed of at least 16 different subunits, 5 of which are encoded in the nucleus. [4Fe-4S] cluster is required as a cofactor.

It localises to the plastid. The protein localises to the chloroplast thylakoid membrane. The catalysed reaction is a plastoquinone + NADH + (n+1) H(+)(in) = a plastoquinol + NAD(+) + n H(+)(out). It carries out the reaction a plastoquinone + NADPH + (n+1) H(+)(in) = a plastoquinol + NADP(+) + n H(+)(out). NDH shuttles electrons from NAD(P)H:plastoquinone, via FMN and iron-sulfur (Fe-S) centers, to quinones in the photosynthetic chain and possibly in a chloroplast respiratory chain. The immediate electron acceptor for the enzyme in this species is believed to be plastoquinone. Couples the redox reaction to proton translocation, and thus conserves the redox energy in a proton gradient. The protein is NAD(P)H-quinone oxidoreductase subunit I, chloroplastic of Nuphar advena (Common spatterdock).